We begin with the raw amino-acid sequence, 465 residues long: Gamma-aminobutyric acid receptor subunit rho-2 (465 aa).

The N-terminal stretch at 1–20 (MPYFMRLALFLFCLMALVES) is a signal peptide. Residues 21–260 (RKPRRKRWTG…LYINFTLRRH (240 aa)) lie on the Extracellular side of the membrane. Arg-105 serves as a coordination point for 4-aminobutanoate. Asn-120 carries N-linked (GlcNAc...) asparagine glycosylation. Ser-169 contributes to the 4-aminobutanoate binding site. A disulfide bridge links Cys-178 with Cys-192. Glu-197 provides a ligand contact to 4-aminobutanoate. An N-linked (GlcNAc...) asparagine glycan is attached at Asn-254. A helical transmembrane segment spans residues 261–281 (IFFFLLQTYFPATLMVMLSWV). Residues 282 to 293 (SFWIDHRAVPAR) lie on the Cytoplasmic side of the membrane. The helical transmembrane segment at 294 to 314 (VSLGIMTVLTMSTIITGVNAS) threads the bilayer. At 315 to 325 (MPRVSYIRAVD) the chain is on the extracellular side. The chain crosses the membrane as a helical span at residues 326–346 (IYLWVSFVFVFLSVLEYAAVN). At 347–443 (YLTTVQEQKE…IFQNTHAIDK (97 aa)) the chain is on the cytoplasmic side. The helical transmembrane segment at 444–464 (YSRLIFPAFYIVFNLIYWSVF) threads the bilayer. Ser-465 is a topological domain (extracellular).

It belongs to the ligand-gated ion channel (TC 1.A.9) family. Gamma-aminobutyric acid receptor (TC 1.A.9.5) subfamily. GABRR2 sub-subfamily. Three rho subunits (rho-1/GBRR1, rho-2/GBRR2 and rho-3/GBRR3) coassemble either to form functional homopentamers or heteropentamers. Rho-2 is unable to form a functional homopentamer. Interacts with SQSTM1. As to expression, expressed in spinal cord and in cerebellum. Expressed in retina.

It is found in the postsynaptic cell membrane. The protein localises to the cell membrane. The catalysed reaction is chloride(in) = chloride(out). With respect to regulation, in contrast with rho-1 and rho-3 homopentamers, rho-2 GABAARs are not inhibited by picrotoxin. In terms of biological role, rho subunit of the pentameric ligand-gated chloride channels responsible for mediating the effects of gamma-aminobutyric acid (GABA), the major inhibitory neurotransmitter in the brain. Rho-containing GABA-gated chloride channels are a subclass of GABA(A) receptors (GABAARs) entirely composed of rho subunits, where GABA molecules bind at the rho intersubunit interfaces. When activated by GABA, rho-GABAARs selectively allow the flow of chloride anions across the cell membrane down their electrochemical gradient. Rho-2 GABAARs may contribute to the regulation of glial development in the cerebellum by controlling extrasynaptic transmission. Rho-2 GABAARs are also involved in neuronal tonic (extrasynaptic) and phasic (synaptic) transmission in the Purkinje neurons of the cerebellum. Rho-2 GABAARs expressed in retina may play a role in retinal neurotransmission. The chain is Gamma-aminobutyric acid receptor subunit rho-2 from Rattus norvegicus (Rat).